Reading from the N-terminus, the 228-residue chain is 7-cyano-7-deazaguanine synthase (228 aa).

10-20 contributes to the ATP binding site; the sequence is FSGGQDSTTLA. Positions 190, 205, 208, and 211 each coordinate Zn(2+).

Belongs to the QueC family. Zn(2+) serves as cofactor.

It carries out the reaction 7-carboxy-7-deazaguanine + NH4(+) + ATP = 7-cyano-7-deazaguanine + ADP + phosphate + H2O + H(+). It functions in the pathway purine metabolism; 7-cyano-7-deazaguanine biosynthesis. Its function is as follows. Catalyzes the ATP-dependent conversion of 7-carboxy-7-deazaguanine (CDG) to 7-cyano-7-deazaguanine (preQ(0)). This is 7-cyano-7-deazaguanine synthase from Helicobacter pylori (strain P12).